Here is a 231-residue protein sequence, read N- to C-terminus: 7-cyano-7-deazaguanine synthase (231 aa).

7 to 17 (LSSGLDSVAAL) serves as a coordination point for ATP. Zn(2+) contacts are provided by Cys195, Cys203, Cys206, and Cys209.

The protein belongs to the QueC family. Zn(2+) serves as cofactor.

It carries out the reaction 7-carboxy-7-deazaguanine + NH4(+) + ATP = 7-cyano-7-deazaguanine + ADP + phosphate + H2O + H(+). It functions in the pathway purine metabolism; 7-cyano-7-deazaguanine biosynthesis. Its function is as follows. Catalyzes the ATP-dependent conversion of 7-carboxy-7-deazaguanine (CDG) to 7-cyano-7-deazaguanine (preQ(0)). In Methanosarcina mazei (strain ATCC BAA-159 / DSM 3647 / Goe1 / Go1 / JCM 11833 / OCM 88) (Methanosarcina frisia), this protein is 7-cyano-7-deazaguanine synthase.